The following is a 320-amino-acid chain: Cytochrome f (320 aa).

The N-terminal stretch at 1–35 (MQTINTFSWIKEQITRSISISLILYIITRSSIANA) is a signal peptide. The heme site is built by Y36, C56, C59, and H60. Residues 286–305 (IQGLLFFFASVILAQIFLVL) traverse the membrane as a helical segment.

Belongs to the cytochrome f family. As to quaternary structure, the 4 large subunits of the cytochrome b6-f complex are cytochrome b6, subunit IV (17 kDa polypeptide, petD), cytochrome f and the Rieske protein, while the 4 small subunits are PetG, PetL, PetM and PetN. The complex functions as a dimer. Heme is required as a cofactor.

The protein localises to the plastid. Its subcellular location is the chloroplast thylakoid membrane. Component of the cytochrome b6-f complex, which mediates electron transfer between photosystem II (PSII) and photosystem I (PSI), cyclic electron flow around PSI, and state transitions. The protein is Cytochrome f (petA) of Spinacia oleracea (Spinach).